A 318-amino-acid chain; its full sequence is Leucine-rich repeat domain-containing protein YddK (318 aa).

LRR repeat units follow at residues 109–129 (NFTSINLDNNQFTHFDATNYD), 130–151 (RLVKLSLNSNALESINFPQGRN), 153–173 (SITHISMNNNALRNIDIDRLS), 174–194 (SVTYFSAAHNQLEFVQLESCE), 195–216 (WLQYLNLSHNQLTDIVAGNKNE), 217–237 (LLLLDLSHNKLTSLHNDLFPN), 238–258 (LNTLLINNNLLSEIKIFYSNF), 260–280 (NVQTLNAANNQLKYINLDFLT), and 284–305 (SIKSLRLDNNKITHIDTNNTSD).

The chain is Leucine-rich repeat domain-containing protein YddK (yddK) from Escherichia coli (strain K12).